Here is a 428-residue protein sequence, read N- to C-terminus: 3-phosphoshikimate 1-carboxyvinyltransferase (428 aa).

3-phosphoshikimate is bound by residues lysine 23, serine 24, and arginine 28. Lysine 23 serves as a coordination point for phosphoenolpyruvate. Positions 97 and 125 each coordinate phosphoenolpyruvate. Residues serine 170, serine 171, glutamine 172, serine 198, aspartate 314, asparagine 337, and lysine 341 each contribute to the 3-phosphoshikimate site. A phosphoenolpyruvate-binding site is contributed by glutamine 172. Aspartate 314 serves as the catalytic Proton acceptor. Phosphoenolpyruvate contacts are provided by arginine 345, arginine 387, and lysine 412.

Belongs to the EPSP synthase family. As to quaternary structure, monomer.

It localises to the cytoplasm. It carries out the reaction 3-phosphoshikimate + phosphoenolpyruvate = 5-O-(1-carboxyvinyl)-3-phosphoshikimate + phosphate. It participates in metabolic intermediate biosynthesis; chorismate biosynthesis; chorismate from D-erythrose 4-phosphate and phosphoenolpyruvate: step 6/7. Functionally, catalyzes the transfer of the enolpyruvyl moiety of phosphoenolpyruvate (PEP) to the 5-hydroxyl of shikimate-3-phosphate (S3P) to produce enolpyruvyl shikimate-3-phosphate and inorganic phosphate. This Buchnera aphidicola subsp. Schizaphis graminum (strain Sg) protein is 3-phosphoshikimate 1-carboxyvinyltransferase.